A 728-amino-acid chain; its full sequence is Catalase-peroxidase 1 (728 aa).

A cross-link (tryptophyl-tyrosyl-methioninium (Trp-Tyr) (with M-244)) is located at residues 91–218; the sequence is WHSAGTYRTA…LAAVQMGLIY (128 aa). Catalysis depends on His92, which acts as the Proton acceptor. The tryptophyl-tyrosyl-methioninium (Tyr-Met) (with W-91) cross-link spans 218–244; that stretch reads YVNPEGPDGNPDPVAAAHDIRETFARM. His259 serves as a coordination point for heme b.

Belongs to the peroxidase family. Peroxidase/catalase subfamily. Homodimer or homotetramer. Heme b is required as a cofactor. Formation of the three residue Trp-Tyr-Met cross-link is important for the catalase, but not the peroxidase activity of the enzyme.

It carries out the reaction H2O2 + AH2 = A + 2 H2O. The enzyme catalyses 2 H2O2 = O2 + 2 H2O. In terms of biological role, bifunctional enzyme with both catalase and broad-spectrum peroxidase activity. The chain is Catalase-peroxidase 1 from Burkholderia cenocepacia (strain HI2424).